Consider the following 218-residue polypeptide: Cytochrome c biogenesis ATP-binding export protein CcmA (218 aa).

The ABC transporter domain maps to 12–217 (LHAEQLSSIR…KLSLEYRGEV (206 aa)). 44–51 (GPNGAGKS) is a binding site for ATP.

This sequence belongs to the ABC transporter superfamily. CcmA exporter (TC 3.A.1.107) family. The complex is composed of two ATP-binding proteins (CcmA) and two transmembrane proteins (CcmB).

It is found in the cell inner membrane. It carries out the reaction heme b(in) + ATP + H2O = heme b(out) + ADP + phosphate + H(+). Functionally, part of the ABC transporter complex CcmAB involved in the biogenesis of c-type cytochromes; once thought to export heme, this seems not to be the case, but its exact role is uncertain. Responsible for energy coupling to the transport system. In Idiomarina loihiensis (strain ATCC BAA-735 / DSM 15497 / L2-TR), this protein is Cytochrome c biogenesis ATP-binding export protein CcmA.